The chain runs to 242 residues: Stress response regulator protein 1 (242 aa).

The Response regulatory domain occupies 118-236; sequence NFLLVDDNFI…FDHIITCIEK (119 aa). 4-aspartylphosphate is present on aspartate 169.

In terms of biological role, required for stress adaptation, morphogenesis and virulence. The protein is Stress response regulator protein 1 (SRR1) of Debaryomyces hansenii (strain ATCC 36239 / CBS 767 / BCRC 21394 / JCM 1990 / NBRC 0083 / IGC 2968) (Yeast).